Consider the following 29-residue polypeptide: GIPTCGETCTLGTCNTPGCTCSWPICTKN.

The segment at residues 1–29 (GIPTCGETCTLGTCNTPGCTCSWPICTKN) is a cross-link (cyclopeptide (Gly-Asn)). Intrachain disulfides connect Cys-5/Cys-19, Cys-9/Cys-21, and Cys-14/Cys-26.

The protein belongs to the cyclotide family. Moebius subfamily. In terms of processing, this is a cyclic peptide.

In terms of biological role, probably participates in a plant defense mechanism. In Melicytus dentatus (Tree violet), this protein is Cyclotide mden-A.